Here is a 366-residue protein sequence, read N- to C-terminus: cAMP-dependent protein kinase regulatory subunit (366 aa).

Positions 1–121 (MSGGNEEDQL…SLESAMRKNL (121 aa)) are dimerization and phosphorylation. Residues 55 to 87 (QRAQEGGNPDAADDDDIIVEPPKRSGGRRTGIS) are disordered. The Pseudophosphorylation motif motif lies at 82 to 86 (RRTGI). Serine 87 carries the post-translational modification Phosphoserine. 3',5'-cyclic AMP contacts are provided by residues 122-239 (LFAH…SKVQ), glutamate 187, arginine 196, 240-366 (ILAD…KLMT), glutamate 311, and arginine 320.

This sequence belongs to the cAMP-dependent kinase regulatory chain family. Tetramer, composed of 2 regulatory (R) and 2 catalytic (C) subunits. In the presence of cAMP it dissociates into 2 active monomeric C subunits and an R dimer that binds four cAMP molecules. The pseudophosphorylation site binds to the substrate-binding region of the catalytic chain but is not phosphorylated. The physiological significance of phosphorylations by other kinases is unclear.

The protein resides in the cytoplasm. It localises to the cytosol. Its function is as follows. Controls the rhythmic contraction of enteric muscles probably by regulating G-protein coupled receptor aex-2-mediated calcium influx in GABAergic DVB neurons. The chain is cAMP-dependent protein kinase regulatory subunit (kin-2) from Caenorhabditis elegans.